Reading from the N-terminus, the 355-residue chain is Tryptophan--tRNA ligase (355 aa).

Residues 13–15 (QPT) and 21–22 (GN) each bind ATP. Positions 14–22 (PTGNLHLGN) match the 'HIGH' region motif. L-tryptophan is bound at residue Asp-137. Residues 149–151 (GED), Ile-208, and 217–221 (KMSKS) each bind ATP. The 'KMSKS' region signature appears at 217–221 (KMSKS).

It belongs to the class-I aminoacyl-tRNA synthetase family. In terms of assembly, homodimer.

The protein localises to the cytoplasm. The enzyme catalyses tRNA(Trp) + L-tryptophan + ATP = L-tryptophyl-tRNA(Trp) + AMP + diphosphate + H(+). Its function is as follows. Catalyzes the attachment of tryptophan to tRNA(Trp). In Mesorhizobium japonicum (strain LMG 29417 / CECT 9101 / MAFF 303099) (Mesorhizobium loti (strain MAFF 303099)), this protein is Tryptophan--tRNA ligase.